The chain runs to 85 residues: Elicitor peptide 7 (85 aa).

Positions 1-62 (MEGEGRREDG…TEVVNIPRSV (62 aa)) are excised as a propeptide. The disordered stretch occupies residues 66 to 85 (NVAARKGKQQTSSGKGGGTN).

It belongs to the brassicaceae elicitor peptide family.

Elicitor of plant defense. The chain is Elicitor peptide 7 (PEP7) from Arabidopsis thaliana (Mouse-ear cress).